Reading from the N-terminus, the 247-residue chain is Carboxy-S-adenosyl-L-methionine synthase (247 aa).

Residues tyrosine 39, 64 to 66 (GCS), 89 to 90 (DN), 117 to 118 (DI), asparagine 132, and arginine 199 contribute to the S-adenosyl-L-methionine site.

Belongs to the class I-like SAM-binding methyltransferase superfamily. Cx-SAM synthase family. In terms of assembly, homodimer.

The enzyme catalyses prephenate + S-adenosyl-L-methionine = carboxy-S-adenosyl-L-methionine + 3-phenylpyruvate + H2O. Catalyzes the conversion of S-adenosyl-L-methionine (SAM) to carboxy-S-adenosyl-L-methionine (Cx-SAM). The sequence is that of Carboxy-S-adenosyl-L-methionine synthase from Escherichia coli (strain K12 / MC4100 / BW2952).